A 118-amino-acid chain; its full sequence is Large ribosomal subunit protein uL24 (118 aa).

The protein belongs to the universal ribosomal protein uL24 family. Part of the 50S ribosomal subunit.

In terms of biological role, one of two assembly initiator proteins, it binds directly to the 5'-end of the 23S rRNA, where it nucleates assembly of the 50S subunit. One of the proteins that surrounds the polypeptide exit tunnel on the outside of the subunit. This is Large ribosomal subunit protein uL24 from Synechococcus sp. (strain CC9902).